We begin with the raw amino-acid sequence, 201 residues long: LexA repressor (201 aa).

The segment at residues 29–49 (VREICKAVGLSSTSSVHFHLK) is a DNA-binding region (H-T-H motif). Catalysis depends on for autocatalytic cleavage activity residues serine 125 and lysine 162.

It belongs to the peptidase S24 family. In terms of assembly, homodimer.

The catalysed reaction is Hydrolysis of Ala-|-Gly bond in repressor LexA.. Its function is as follows. Represses a number of genes involved in the response to DNA damage (SOS response), including recA and lexA. In the presence of single-stranded DNA, RecA interacts with LexA causing an autocatalytic cleavage which disrupts the DNA-binding part of LexA, leading to derepression of the SOS regulon and eventually DNA repair. In Clostridium botulinum (strain ATCC 19397 / Type A), this protein is LexA repressor.